The sequence spans 239 residues: Purine nucleoside phosphorylase DeoD-type (239 aa).

His5 lines the a purine D-ribonucleoside pocket. Residues Gly21 and Arg25 each contribute to the phosphate site. N6-acetyllysine is present on Lys27. Residues Arg44 and 88–91 contribute to the phosphate site; that span reads RVGS. Residues 180 to 182 and 204 to 205 contribute to the a purine D-ribonucleoside site; these read EME and SD. The active-site Proton donor is Asp205.

Belongs to the PNP/UDP phosphorylase family. Homohexamer; trimer of homodimers.

The catalysed reaction is a purine D-ribonucleoside + phosphate = a purine nucleobase + alpha-D-ribose 1-phosphate. The enzyme catalyses a purine 2'-deoxy-D-ribonucleoside + phosphate = a purine nucleobase + 2-deoxy-alpha-D-ribose 1-phosphate. Catalyzes the reversible phosphorolytic breakdown of the N-glycosidic bond in the beta-(deoxy)ribonucleoside molecules, with the formation of the corresponding free purine bases and pentose-1-phosphate. The polypeptide is Purine nucleoside phosphorylase DeoD-type (Escherichia coli O81 (strain ED1a)).